A 78-amino-acid polypeptide reads, in one-letter code: Large ribosomal subunit protein bL28B (78 aa).

Positions 1–29 are disordered; the sequence is MSAHCQVTGRKPGFGNTVSHSHRRSRRRW. Over residues 20–29 the composition is skewed to basic residues; that stretch reads HSHRRSRRRW.

The protein belongs to the bacterial ribosomal protein bL28 family.

The polypeptide is Large ribosomal subunit protein bL28B (rpmB2) (Mycobacterium bovis (strain ATCC BAA-935 / AF2122/97)).